The chain runs to 132 residues: Replication enhancer protein (132 aa).

Belongs to the geminiviridae replication enhancer protein family. Homooligomer. Interacts with the replication-associated protein (REP). Interacts with host proliferating cell nuclear antigen (PCNA). Interacts with host retinoblastoma-related protein 1 (RBR1), and may thereby deregulate the host cell cycle. Oligomerization and interaction with PCNA are necessary for optimal replication enhancement.

Its function is as follows. Increases viral DNA accumulation. Enhances infectivity and symptom expression. The chain is Replication enhancer protein from Tomato mottle virus (isolate Florida) (ToMoV).